The chain runs to 215 residues: N-(5'-phosphoribosyl)anthranilate isomerase (215 aa).

The protein belongs to the TrpF family.

The enzyme catalyses N-(5-phospho-beta-D-ribosyl)anthranilate = 1-(2-carboxyphenylamino)-1-deoxy-D-ribulose 5-phosphate. It functions in the pathway amino-acid biosynthesis; L-tryptophan biosynthesis; L-tryptophan from chorismate: step 3/5. The sequence is that of N-(5'-phosphoribosyl)anthranilate isomerase from Pelodictyon phaeoclathratiforme (strain DSM 5477 / BU-1).